Reading from the N-terminus, the 101-residue chain is DNA-binding protein Fis (101 aa).

Positions Gln-77–Lys-96 form a DNA-binding region, H-T-H motif.

Belongs to the transcriptional regulatory Fis family. Homodimer.

Functionally, activates ribosomal RNA transcription. Plays a direct role in upstream activation of rRNA promoters. The protein is DNA-binding protein Fis of Shewanella halifaxensis (strain HAW-EB4).